A 57-amino-acid polypeptide reads, in one-letter code: MPAIQPPLYLTFLLLTLLYLIITLYVWTILTINHNTAVRYAALYQRSFSRWGFDQSL.

Over 1–8 the chain is Virion surface; the sequence is MPAIQPPL. A helical transmembrane segment spans residues 9-29; it reads YLTFLLLTLLYLIITLYVWTI. Residues 30-57 are Intravirion-facing; the sequence is LTINHNTAVRYAALYQRSFSRWGFDQSL.

The protein belongs to the rubulavirus small hydrophobic protein family. As to quaternary structure, interacts with host TNFRSF1A, RIPK1 and IRAK1; these interactions interfere with host NF-kappa-B activation at the level of receptor complexes. Interacts with host protein UBQLN4.

Its subcellular location is the virion membrane. It is found in the host cell membrane. Its function is as follows. Plays a role in the inhibition of the host NF-kappa-B pathway. This inhibition occurs at the receptor level, by preventing the signaling of TNFR1 as well as IL-1R and TLR3. This Mumps virus genotype A (strain Jeryl-Lynn) (MuV) protein is Small hydrophobic protein (SH).